The following is a 109-amino-acid chain: Iron-sulfur cluster assembly protein CyaY (109 aa).

The protein belongs to the frataxin family.

Involved in iron-sulfur (Fe-S) cluster assembly. May act as a regulator of Fe-S biogenesis. This is Iron-sulfur cluster assembly protein CyaY from Burkholderia lata (strain ATCC 17760 / DSM 23089 / LMG 22485 / NCIMB 9086 / R18194 / 383).